A 477-amino-acid chain; its full sequence is SH3 domain-binding protein 5 homolog (477 aa).

The stretch at 12–95 forms a coiled coil; it reads QIQIELENLN…AAVKFQRANE (84 aa). Residues Ser-113 and Ser-115 each carry the phosphoserine modification. A coiled-coil region spans residues 122–221; it reads NAWQEMLNHA…YSTALRNLER (100 aa). 2 disordered regions span residues 224 to 258 and 276 to 306; these read EDIH…ALPS and GSQM…ETGA. Acidic residues predominate over residues 291–305; sequence ETEDEEDACDYDETG.

It belongs to the SH3BP5 family.

This chain is SH3 domain-binding protein 5 homolog (pcs), found in Drosophila melanogaster (Fruit fly).